We begin with the raw amino-acid sequence, 297 residues long: Quinate/shikimate dehydrogenase (297 aa).

2 residues coordinate substrate: Lys-80 and Asp-116. NAD(+)-binding positions include 141–144 (AGGA), 164–167 (NRRD), Lys-214, 241–244 (CVYN), and Gly-264.

It belongs to the shikimate dehydrogenase family. As to quaternary structure, homodimer.

It carries out the reaction L-quinate + NAD(+) = 3-dehydroquinate + NADH + H(+). The catalysed reaction is L-quinate + NADP(+) = 3-dehydroquinate + NADPH + H(+). The enzyme catalyses shikimate + NADP(+) = 3-dehydroshikimate + NADPH + H(+). It catalyses the reaction shikimate + NAD(+) = 3-dehydroshikimate + NADH + H(+). It participates in metabolic intermediate biosynthesis; chorismate biosynthesis; chorismate from D-erythrose 4-phosphate and phosphoenolpyruvate: step 4/7. In terms of biological role, the actual biological function of YdiB remains unclear, nor is it known whether 3-dehydroshikimate or quinate represents the natural substrate. Catalyzes the reversible NAD-dependent reduction of both 3-dehydroshikimate (DHSA) and 3-dehydroquinate to yield shikimate (SA) and quinate, respectively. It can use both NAD or NADP for catalysis, however it has higher catalytic efficiency with NAD. This Shigella dysenteriae serotype 1 (strain Sd197) protein is Quinate/shikimate dehydrogenase.